The sequence spans 206 residues: Ribosomal RNA large subunit methyltransferase E (206 aa).

Gly60, Trp62, Asp80, Asp96, and Asp121 together coordinate S-adenosyl-L-methionine. The active-site Proton acceptor is the Lys161.

The protein belongs to the class I-like SAM-binding methyltransferase superfamily. RNA methyltransferase RlmE family.

The protein resides in the cytoplasm. It carries out the reaction uridine(2552) in 23S rRNA + S-adenosyl-L-methionine = 2'-O-methyluridine(2552) in 23S rRNA + S-adenosyl-L-homocysteine + H(+). Its function is as follows. Specifically methylates the uridine in position 2552 of 23S rRNA at the 2'-O position of the ribose in the fully assembled 50S ribosomal subunit. The protein is Ribosomal RNA large subunit methyltransferase E of Legionella pneumophila (strain Corby).